The following is a 406-amino-acid chain: Coenzyme A biosynthesis bifunctional protein CoaBC (406 aa).

The interval 2–190 (SLAGKKIVLG…SPVNDLKHLN (189 aa)) is phosphopantothenoylcysteine decarboxylase. Cys158 (proton donor) is an active-site residue. The phosphopantothenate--cysteine ligase stretch occupies residues 191–406 (IMITAGPTRE…VTRYDEKNRR (216 aa)). CTP contacts are provided by residues 273-275 (GCA), Asp279, Lys289, 308-311 (PDIV), Phe327, Lys341, and Lys345.

In the N-terminal section; belongs to the HFCD (homo-oligomeric flavin containing Cys decarboxylase) superfamily. This sequence in the C-terminal section; belongs to the PPC synthetase family. The cofactor is Mg(2+). FMN is required as a cofactor.

It carries out the reaction N-[(R)-4-phosphopantothenoyl]-L-cysteine + H(+) = (R)-4'-phosphopantetheine + CO2. The catalysed reaction is (R)-4'-phosphopantothenate + L-cysteine + CTP = N-[(R)-4-phosphopantothenoyl]-L-cysteine + CMP + diphosphate + H(+). It functions in the pathway cofactor biosynthesis; coenzyme A biosynthesis; CoA from (R)-pantothenate: step 2/5. It participates in cofactor biosynthesis; coenzyme A biosynthesis; CoA from (R)-pantothenate: step 3/5. Its function is as follows. Catalyzes two sequential steps in the biosynthesis of coenzyme A. In the first step cysteine is conjugated to 4'-phosphopantothenate to form 4-phosphopantothenoylcysteine. In the second step the latter compound is decarboxylated to form 4'-phosphopantotheine. The sequence is that of Coenzyme A biosynthesis bifunctional protein CoaBC from Escherichia coli O6:H1 (strain CFT073 / ATCC 700928 / UPEC).